Reading from the N-terminus, the 305-residue chain is Probable aspartoacylase (305 aa).

Residues H13 and E16 each contribute to the Zn(2+) site. Substrate is bound by residues R55 and 62–63; that span reads NR. H105 contributes to the Zn(2+) binding site. 2 residues coordinate substrate: E163 and Y273.

This sequence belongs to the AspA/AstE family. Aspartoacylase subfamily. Zn(2+) serves as cofactor.

The enzyme catalyses an N-acyl-L-aspartate + H2O = a carboxylate + L-aspartate. The sequence is that of Probable aspartoacylase from Prochlorococcus marinus (strain NATL1A).